We begin with the raw amino-acid sequence, 346 residues long: Elongation factor 1-alpha (346 aa).

In terms of domain architecture, tr-type G spans 1 to 127 (GTSQADVALL…DNVEPPKRPS (127 aa)). 49–52 (NKMD) lines the GTP pocket.

The protein belongs to the TRAFAC class translation factor GTPase superfamily. Classic translation factor GTPase family. EF-Tu/EF-1A subfamily.

It is found in the cytoplasm. Functionally, this protein promotes the GTP-dependent binding of aminoacyl-tRNA to the A-site of ribosomes during protein biosynthesis. This chain is Elongation factor 1-alpha, found in Eimeria bovis.